A 381-amino-acid polypeptide reads, in one-letter code: NF-kappa-B inhibitor-like protein 1 (381 aa).

Positions 1–34 are disordered; that stretch reads MSNPSPQVPEEEASTSVCRPKSSMASTSRRQRRE. ANK repeat units follow at residues 64–93 and 97–133; these read GQPP…DPAH and HGDT…IKNK. 3 disordered regions span residues 131-167, 186-242, and 256-294; these read KNKD…EWRQ, GDAS…QEEE, and ELRE…RGSL. A Phosphoserine modification is found at Ser150. Over residues 150 to 159 the composition is skewed to acidic residues; it reads SAEEEEEDDA. Positions 256–287 are enriched in basic and acidic residues; sequence ELRESRARRAQEALGDREPKPARAGPRAEHPR.

In terms of assembly, interacts with CACTIN (via N-terminal domain); the interaction occurs in a pro-inflammatory-independent manner.

It localises to the nucleus. Functionally, involved in the regulation of innate immune response. Acts as negative regulator of Toll-like receptor and interferon-regulatory factor (IRF) signaling pathways. Contributes to the negative regulation of transcriptional activation of NF-kappa-B target genes in response to endogenous pro-inflammatory stimuli. This Macaca mulatta (Rhesus macaque) protein is NF-kappa-B inhibitor-like protein 1 (NFKBIL1).